The chain runs to 327 residues: 4-hydroxythreonine-4-phosphate dehydrogenase (327 aa).

2 residues coordinate substrate: His134 and Thr135. Residues His164, His209, and His264 each contribute to the a divalent metal cation site. Substrate-binding residues include Lys272, Asn281, and Arg290.

The protein belongs to the PdxA family. Homodimer. Zn(2+) is required as a cofactor. Mg(2+) serves as cofactor. The cofactor is Co(2+).

The protein localises to the cytoplasm. The catalysed reaction is 4-(phosphooxy)-L-threonine + NAD(+) = 3-amino-2-oxopropyl phosphate + CO2 + NADH. It participates in cofactor biosynthesis; pyridoxine 5'-phosphate biosynthesis; pyridoxine 5'-phosphate from D-erythrose 4-phosphate: step 4/5. Functionally, catalyzes the NAD(P)-dependent oxidation of 4-(phosphooxy)-L-threonine (HTP) into 2-amino-3-oxo-4-(phosphooxy)butyric acid which spontaneously decarboxylates to form 3-amino-2-oxopropyl phosphate (AHAP). The chain is 4-hydroxythreonine-4-phosphate dehydrogenase from Shewanella frigidimarina (strain NCIMB 400).